The chain runs to 453 residues: MAVVKLSPWANYSSSKSEIKSSSSSSSSKSSLSAYVINVSSSPRLSFYNPYPRRLHHQRLSSPASIRCSVTSSDQIQAPLPAKQKPECFGVFCLTYDLKAEEETKSWKKIINVAVSGAAGMISNHLLFKLASGEVFGPDQPISLKLLGSERSFAALEGVAMELEDSLYPLLRQVSIGIDPYEIFQDAEWALLIGAKPRGPGMERADLLDINGQIFAEQGKALNAVASPNVKVMVVGNPCNTNALICLKNAPNIPPKNFHALTRLDENRAKCQLALKAGVFYDKVSNVTIWGNHSTTQVPDFLNAKIHGIPVTEVIRDRKWLEDEFTNMVQTRGGVLIKKWGRSSAASTAVSIVDAIRSLVTPTPEGDWFSTGVYTNGNPYGIAEDIVFSMPCRSKGDGDYEFVKDVIFDDYLSKKIKKSEDELLAEKKCVAHLTGEGIAVCDLPEDTMLPGEM.

The transit peptide at 1-68 (MAVVKLSPWA…RLSSPASIRC (68 aa)) directs the protein to the chloroplast. The cysteines at positions 88 and 93 are disulfide-linked. 117–123 (GAAGMIS) serves as a coordination point for NADP(+). Residues arginine 198 and arginine 204 each contribute to the substrate site. NADP(+)-binding positions include asparagine 211, glutamine 218, and 235–237 (VGN). The substrate site is built by asparagine 237 and arginine 268. The active-site Proton acceptor is histidine 293. Cysteine 429 and cysteine 441 are joined by a disulfide.

The protein belongs to the LDH/MDH superfamily. MDH type 2 family. In terms of assembly, homodimer.

The protein localises to the plastid. It is found in the chloroplast. It catalyses the reaction (S)-malate + NADP(+) = oxaloacetate + NADPH + H(+). Chloroplast NADP-MDH is activated upon illumination. In order to be enzymatically active, disulfide bridges on the protein must be reduced by thioredoxin which receives electrons from ferredoxin and the electron transport system of photosynthesis. The chloroplastic, NADP-dependent form is essential for the photosynthesis C4 cycle, which allows plants to circumvent the problem of photorespiration. In C4 plants, NADP-MDH activity acts to convert oxaloacetate to malate in chloroplasts of mesophyll cells for transport to the bundle sheath cells. This chain is Malate dehydrogenase [NADP], chloroplastic, found in Flaveria bidentis (Coastal plain yellowtops).